The following is a 230-amino-acid chain: NAD(P)H-hydrate epimerase (230 aa).

A YjeF N-terminal domain is found at A11–L218. N61–D65 serves as a coordination point for (6S)-NADPHX. Residues N62 and D126 each coordinate K(+). (6S)-NADPHX contacts are provided by residues G130–P136 and D159. S162 lines the K(+) pocket.

It belongs to the NnrE/AIBP family. K(+) serves as cofactor.

The enzyme catalyses (6R)-NADHX = (6S)-NADHX. It carries out the reaction (6R)-NADPHX = (6S)-NADPHX. In terms of biological role, catalyzes the epimerization of the S- and R-forms of NAD(P)HX, a damaged form of NAD(P)H that is a result of enzymatic or heat-dependent hydration. This is a prerequisite for the S-specific NAD(P)H-hydrate dehydratase to allow the repair of both epimers of NAD(P)HX. This Drosophila sechellia (Fruit fly) protein is NAD(P)H-hydrate epimerase.